The following is a 131-amino-acid chain: Large ribosomal subunit protein bL17 (131 aa).

The protein belongs to the bacterial ribosomal protein bL17 family. In terms of assembly, part of the 50S ribosomal subunit. Contacts protein L32.

The polypeptide is Large ribosomal subunit protein bL17 (Oenococcus oeni (strain ATCC BAA-331 / PSU-1)).